Consider the following 138-residue polypeptide: Small ribosomal subunit protein uS11c (138 aa).

A disordered region spans residues 1–22; that stretch reads MAKPILRVGSRKNTRSASRKNV. Positions 9–22 are enriched in basic residues; the sequence is GSRKNTRSASRKNV.

This sequence belongs to the universal ribosomal protein uS11 family. In terms of assembly, part of the 30S ribosomal subunit.

It localises to the plastid. Its subcellular location is the chloroplast. In Draba nemorosa (Woodland whitlowgrass), this protein is Small ribosomal subunit protein uS11c.